Consider the following 142-residue polypeptide: Transcriptional regulator MraZ (142 aa).

SpoVT-AbrB domains lie at Glu-5 to Glu-47 and Ala-76 to Lys-119.

This sequence belongs to the MraZ family. In terms of assembly, forms oligomers.

The protein localises to the cytoplasm. It localises to the nucleoid. In Clostridium acetobutylicum (strain ATCC 824 / DSM 792 / JCM 1419 / IAM 19013 / LMG 5710 / NBRC 13948 / NRRL B-527 / VKM B-1787 / 2291 / W), this protein is Transcriptional regulator MraZ.